We begin with the raw amino-acid sequence, 115 residues long: DNA-binding protein PH1060 (115 aa).

Belongs to the PDCD5 family.

The sequence is that of DNA-binding protein PH1060 from Pyrococcus horikoshii (strain ATCC 700860 / DSM 12428 / JCM 9974 / NBRC 100139 / OT-3).